Reading from the N-terminus, the 654-residue chain is RNA polymerase I-specific transcription initiation factor tif-1A (654 aa).

Residues 1 to 37 (MKRSTANAPKLSPKHESESDPKKVKLEEEAKPTVNQA) form a disordered region. The span at 13 to 31 (PKHESESDPKKVKLEEEAK) shows a compositional bias: basic and acidic residues.

It belongs to the RRN3 family.

Its subcellular location is the nucleus. The protein localises to the nucleolus. Functionally, required for efficient transcription initiation by RNA polymerase I (Pol I). This chain is RNA polymerase I-specific transcription initiation factor tif-1A, found in Caenorhabditis elegans.